We begin with the raw amino-acid sequence, 317 residues long: AT-hook motif nuclear-localized protein 22 (317 aa).

2 disordered regions span residues His-22–Asp-41 and Leu-48–Ile-106. Residues Gln-26–Asn-35 show a composition bias toward low complexity. Residues Leu-48 to Ala-64 show a composition bias toward basic and acidic residues. Gly residues predominate over residues Gly-72–Asp-84. The segment at residues Arg-89 to Lys-101 is a DNA-binding region (a.T hook). One can recognise a PPC domain in the interval Ala-113–Gly-253. Residues Asn-258–Gln-285 form a disordered region. The span at Gln-270 to Gln-282 shows a compositional bias: low complexity.

In terms of assembly, homodimer. Interacts with HDA1/HDA19, HDA6 and HDA9. Expressed at the hypocotyl-root transition zone and the root hair zone. Also detected in the inflorescence.

The protein resides in the nucleus. In terms of biological role, transcription factor that specifically binds AT-rich DNA sequences related to the nuclear matrix attachment regions (MARs). Binds an AT-rich DNA sequences in the FLOWERING LOCUS T (FT) promoter. Acts redundantly with AHL18, AHL27 and AHL29 in the regulation of flowering and regulation of the hypocotyl elongation. Plays a role in both photo- and skotomorphogenesis. Acts as a chromatin remodeling factor that modifies the architecture of FLOWERING LOCUS T (FT) chromatin by modulating both H3 acetylation and methylation leading to the regulation of FT expression during flowering induction. The polypeptide is AT-hook motif nuclear-localized protein 22 (Arabidopsis thaliana (Mouse-ear cress)).